Consider the following 392-residue polypeptide: Chorismate synthase (392 aa).

Residues Arg-39 and Arg-45 each coordinate NADP(+). Residues 131 to 133, 255 to 256, Gly-300, 315 to 319, and Arg-341 each bind FMN; these read RSS, NA, and KPIPT.

It belongs to the chorismate synthase family. Homotetramer. It depends on FMNH2 as a cofactor.

It catalyses the reaction 5-O-(1-carboxyvinyl)-3-phosphoshikimate = chorismate + phosphate. It functions in the pathway metabolic intermediate biosynthesis; chorismate biosynthesis; chorismate from D-erythrose 4-phosphate and phosphoenolpyruvate: step 7/7. Functionally, catalyzes the anti-1,4-elimination of the C-3 phosphate and the C-6 proR hydrogen from 5-enolpyruvylshikimate-3-phosphate (EPSP) to yield chorismate, which is the branch point compound that serves as the starting substrate for the three terminal pathways of aromatic amino acid biosynthesis. This reaction introduces a second double bond into the aromatic ring system. The protein is Chorismate synthase of Leuconostoc citreum (strain KM20).